The chain runs to 416 residues: Casein kinase I isoform epsilon (416 aa).

The Protein kinase domain occupies 9–277 (YRLGRKIGSG…YLRQLFRNLF (269 aa)). ATP contacts are provided by residues 15 to 23 (IGSGSFGDI) and Lys38. Residue Asp128 is the Proton acceptor of the active site. A compositionally biased stretch (basic and acidic residues) spans 301–318 (PEDVDRERREHEREERMG). The interval 301–416 (PEDVDRERRE…TSVPFDHLGK (116 aa)) is disordered. Ser343 and Ser354 each carry phosphoserine. Polar residues predominate over residues 351 to 365 (TPASRIQQTGNTSPR). Thr362 is modified (phosphothreonine). A Phosphoserine modification is found at Ser363. Arg382 carries the omega-N-methylarginine modification. Phosphoserine is present on residues Ser389, Ser405, and Ser408.

This sequence belongs to the protein kinase superfamily. CK1 Ser/Thr protein kinase family. Casein kinase I subfamily. As to quaternary structure, monomer. Component of the circadian core oscillator, which includes the CRY proteins, CLOCK, or NPAS2, ARTNL/BMAL1 or ARTNL2/BMAL2, CSNK1D and/or CSNK1E, TIMELESS and the PER proteins. Interacts with ANKRD6. Interacts with PER1. Interacts with DBNDD2, LRP5, LRP6 and SOCS3. Interacts with SNAI1 (via zinc fingers). Interacts with DDX3X; this interaction greatly enhances CSNK1E affinity for ATP and DVL2 phosphorylation, but inhibits DDX3X ATPase/helicase activity. In the presence of RNA, the interaction is decreased. Interacts with FAM83A, FAM83B, FAM83E and FAM83H (via DUF1669). In terms of processing, autophosphorylated. Partially dephosphorylated by PPP5C. May be dephosphorylated by PP1. In terms of tissue distribution, expressed in all tissues examined, including brain, heart, lung, liver, pancreas, kidney, placenta and skeletal muscle. Expressed in monocytes and lymphocytes but not in granulocytes.

Its subcellular location is the cytoplasm. The protein localises to the nucleus. It carries out the reaction L-seryl-[protein] + ATP = O-phospho-L-seryl-[protein] + ADP + H(+). It catalyses the reaction L-threonyl-[protein] + ATP = O-phospho-L-threonyl-[protein] + ADP + H(+). With respect to regulation, phosphorylation leads to a decrease in the catalytic activity. Casein kinases are operationally defined by their preferential utilization of acidic proteins such as caseins as substrates. Participates in Wnt signaling. Phosphorylates DVL1. Phosphorylates DVL2. Phosphorylates NEDD9/HEF1. Central component of the circadian clock. In balance with PP1, determines the circadian period length, through the regulation of the speed and rhythmicity of PER1 and PER2 phosphorylation. Controls PER1 and PER2 nuclear transport and degradation. Inhibits cytokine-induced granuloytic differentiation. The sequence is that of Casein kinase I isoform epsilon (Csnk1e) from Mus musculus (Mouse).